The following is a 173-amino-acid chain: Crossover junction endodeoxyribonuclease RuvC (173 aa).

Catalysis depends on residues Asp-8, Glu-67, and Asp-139. Residues Asp-8, Glu-67, and Asp-139 each coordinate Mg(2+).

The protein belongs to the RuvC family. Homodimer which binds Holliday junction (HJ) DNA. The HJ becomes 2-fold symmetrical on binding to RuvC with unstacked arms; it has a different conformation from HJ DNA in complex with RuvA. In the full resolvosome a probable DNA-RuvA(4)-RuvB(12)-RuvC(2) complex forms which resolves the HJ. It depends on Mg(2+) as a cofactor.

The protein localises to the cytoplasm. It carries out the reaction Endonucleolytic cleavage at a junction such as a reciprocal single-stranded crossover between two homologous DNA duplexes (Holliday junction).. The RuvA-RuvB-RuvC complex processes Holliday junction (HJ) DNA during genetic recombination and DNA repair. Endonuclease that resolves HJ intermediates. Cleaves cruciform DNA by making single-stranded nicks across the HJ at symmetrical positions within the homologous arms, yielding a 5'-phosphate and a 3'-hydroxyl group; requires a central core of homology in the junction. The consensus cleavage sequence is 5'-(A/T)TT(C/G)-3'. Cleavage occurs on the 3'-side of the TT dinucleotide at the point of strand exchange. HJ branch migration catalyzed by RuvA-RuvB allows RuvC to scan DNA until it finds its consensus sequence, where it cleaves and resolves the cruciform DNA. In Pseudoalteromonas atlantica (strain T6c / ATCC BAA-1087), this protein is Crossover junction endodeoxyribonuclease RuvC.